The chain runs to 111 residues: uncharacterized protein (111 aa).

The protein resides in the mitochondrion. This is an uncharacterized protein from Arabidopsis thaliana (Mouse-ear cress).